We begin with the raw amino-acid sequence, 402 residues long: mRNA-capping enzyme subunit alpha (402 aa).

Lys66 serves as the catalytic N6-GMP-lysine intermediate.

This sequence belongs to the eukaryotic GTase family. As to quaternary structure, heterodimer. The mRNA-capping enzyme is composed of two separate chains alpha and beta, respectively a mRNA guanylyltransferase and an mRNA 5'-triphosphate monophosphatase.

The protein resides in the nucleus. The catalysed reaction is a 5'-end diphospho-ribonucleoside in mRNA + GTP + H(+) = a 5'-end (5'-triphosphoguanosine)-ribonucleoside in mRNA + diphosphate. In terms of biological role, second step of mRNA capping. Transfer of the GMP moiety of GTP to the 5'-end of RNA via an enzyme-GMP covalent reaction intermediate. The polypeptide is mRNA-capping enzyme subunit alpha (rnp-2) (Neurospora crassa (strain ATCC 24698 / 74-OR23-1A / CBS 708.71 / DSM 1257 / FGSC 987)).